The chain runs to 273 residues: Peroxiredoxin-4 (273 aa).

A signal peptide spans 1 to 40 (METWSKLLDGTTPSRRWRKLVLLLPPLLLFLLQTEALQGL). Residues 81 to 239 (AKISKPAPYW…TLRLVQAFQY (159 aa)) form the Thioredoxin domain. The active-site Cysteine sulfenic acid (-SOH) intermediate is cysteine 126.

The protein belongs to the peroxiredoxin family. AhpC/Prx1 subfamily. Homodimer; disulfide-linked, upon oxidation. 5 homodimers assemble to form a ring-like decamer. Post-translationally, the enzyme can be inactivated by further oxidation of the cysteine sulfenic acid (C(P)-SOH) to sulphinic acid (C(P)-SO2H) and sulphonic acid (C(P)-SO3H) instead of its condensation to a disulfide bond.

Its subcellular location is the cytoplasm. The protein resides in the endoplasmic reticulum. It is found in the secreted. The catalysed reaction is a hydroperoxide + [thioredoxin]-dithiol = an alcohol + [thioredoxin]-disulfide + H2O. Thiol-specific peroxidase that catalyzes the reduction of hydrogen peroxide and organic hydroperoxides to water and alcohols, respectively. Plays a role in cell protection against oxidative stress by detoxifying peroxides and as sensor of hydrogen peroxide-mediated signaling events. Regulates the activation of NF-kappa-B in the cytosol by a modulation of I-kappa-B-alpha phosphorylation. The polypeptide is Peroxiredoxin-4 (Prdx4) (Rattus norvegicus (Rat)).